The chain runs to 227 residues: Cytochrome c oxidase subunit 2 (227 aa).

Residues 1-14 (MAHPLQLGLQDASS) are Mitochondrial intermembrane-facing. A helical membrane pass occupies residues 15-45 (PIMEELLYFHDHALMIVFLISSLVLYTISLM). The Mitochondrial matrix segment spans residues 46–59 (LTTKLMHTSTMNAQ). The chain crosses the membrane as a helical span at residues 60–87 (MVETMWTILPAVILTSIALPSLRILYMT). Residues 88–227 (DEINNPLLTI…HFETWSTLTS (140 aa)) lie on the Mitochondrial intermembrane side of the membrane. Residues H161, C196, E198, C200, H204, and M207 each contribute to the Cu cation site. A Mg(2+)-binding site is contributed by E198.

The protein belongs to the cytochrome c oxidase subunit 2 family. Component of the cytochrome c oxidase (complex IV, CIV), a multisubunit enzyme composed of 14 subunits. The complex is composed of a catalytic core of 3 subunits MT-CO1, MT-CO2 and MT-CO3, encoded in the mitochondrial DNA, and 11 supernumerary subunits COX4I, COX5A, COX5B, COX6A, COX6B, COX6C, COX7A, COX7B, COX7C, COX8 and NDUFA4, which are encoded in the nuclear genome. The complex exists as a monomer or a dimer and forms supercomplexes (SCs) in the inner mitochondrial membrane with NADH-ubiquinone oxidoreductase (complex I, CI) and ubiquinol-cytochrome c oxidoreductase (cytochrome b-c1 complex, complex III, CIII), resulting in different assemblies (supercomplex SCI(1)III(2)IV(1) and megacomplex MCI(2)III(2)IV(2)). Found in a complex with TMEM177, COA6, COX18, COX20, SCO1 and SCO2. Interacts with TMEM177 in a COX20-dependent manner. Interacts with COX20. Interacts with COX16. The cofactor is Cu cation.

It localises to the mitochondrion inner membrane. The catalysed reaction is 4 Fe(II)-[cytochrome c] + O2 + 8 H(+)(in) = 4 Fe(III)-[cytochrome c] + 2 H2O + 4 H(+)(out). Functionally, component of the cytochrome c oxidase, the last enzyme in the mitochondrial electron transport chain which drives oxidative phosphorylation. The respiratory chain contains 3 multisubunit complexes succinate dehydrogenase (complex II, CII), ubiquinol-cytochrome c oxidoreductase (cytochrome b-c1 complex, complex III, CIII) and cytochrome c oxidase (complex IV, CIV), that cooperate to transfer electrons derived from NADH and succinate to molecular oxygen, creating an electrochemical gradient over the inner membrane that drives transmembrane transport and the ATP synthase. Cytochrome c oxidase is the component of the respiratory chain that catalyzes the reduction of oxygen to water. Electrons originating from reduced cytochrome c in the intermembrane space (IMS) are transferred via the dinuclear copper A center (CU(A)) of subunit 2 and heme A of subunit 1 to the active site in subunit 1, a binuclear center (BNC) formed by heme A3 and copper B (CU(B)). The BNC reduces molecular oxygen to 2 water molecules using 4 electrons from cytochrome c in the IMS and 4 protons from the mitochondrial matrix. The sequence is that of Cytochrome c oxidase subunit 2 (MT-CO2) from Galeopterus variegatus (Malayan flying lemur).